We begin with the raw amino-acid sequence, 232 residues long: Fibrillarin-like rRNA/tRNA 2'-O-methyltransferase (232 aa).

Residues 87–88 (TT), 105–106 (EF), 130–131 (DA), and 150–153 (DVAQ) each bind S-adenosyl-L-methionine.

Belongs to the methyltransferase superfamily. Fibrillarin family. In terms of assembly, interacts with nop5. Component of box C/D small ribonucleoprotein (sRNP) particles that contain rpl7ae, FlpA and nop5, plus a guide RNA.

In terms of biological role, involved in pre-rRNA and tRNA processing. Utilizes the methyl donor S-adenosyl-L-methionine to catalyze the site-specific 2'-hydroxyl methylation of ribose moieties in rRNA and tRNA. Site specificity is provided by a guide RNA that base pairs with the substrate. Methylation occurs at a characteristic distance from the sequence involved in base pairing with the guide RNA. This chain is Fibrillarin-like rRNA/tRNA 2'-O-methyltransferase, found in Methanococcus maripaludis (strain C7 / ATCC BAA-1331).